Here is an 87-residue protein sequence, read N- to C-terminus: Small ribosomal subunit protein bS20 (87 aa).

Residues 1–10 (MANIKSKQKR) are compositionally biased toward basic residues. Positions 1–27 (MANIKSKQKRILTNEKSRQRNKSVRSA) are disordered.

Belongs to the bacterial ribosomal protein bS20 family.

Its function is as follows. Binds directly to 16S ribosomal RNA. In Corynebacterium aurimucosum (strain ATCC 700975 / DSM 44827 / CIP 107346 / CN-1) (Corynebacterium nigricans), this protein is Small ribosomal subunit protein bS20.